The sequence spans 432 residues: D-amino acid dehydrogenase (432 aa).

An FAD-binding site is contributed by 3 to 17 (VVVLGSGVVGVASAW).

Belongs to the DadA oxidoreductase family. It depends on FAD as a cofactor.

It carries out the reaction a D-alpha-amino acid + A + H2O = a 2-oxocarboxylate + AH2 + NH4(+). It participates in amino-acid degradation; D-alanine degradation; NH(3) and pyruvate from D-alanine: step 1/1. Its function is as follows. Oxidative deamination of D-amino acids. This chain is D-amino acid dehydrogenase, found in Cronobacter sakazakii (strain ATCC BAA-894) (Enterobacter sakazakii).